Reading from the N-terminus, the 143-residue chain is MSRLPVLLLLHLLVSPGLQAPMTQTTSLKTSWAKCSNMIDEIITHLNQPPLPSPDFNNLNEEDQTILVEKNLRRSNLEAFSKAVKSLQNASAIESILKNLPPCLPMATAAPTRPPIRITNGDRNDFRRKLKFYLKTLENEQAQ.

The first 19 residues, 1–19, serve as a signal peptide directing secretion; the sequence is MSRLPVLLLLHLLVSPGLQ. Residues cysteine 35 and cysteine 103 are joined by a disulfide bond. The N-linked (GlcNAc...) asparagine glycan is linked to asparagine 89.

The protein belongs to the IL-3 family. In terms of assembly, monomer. As to expression, activated T-cells, mast cells, natural killer cells.

It localises to the secreted. Its function is as follows. Granulocyte/macrophage colony-stimulating factors are cytokines that act in hematopoiesis by controlling the production, differentiation, and function of 2 related white cell populations of the blood, the granulocytes and the monocytes-macrophages. Functionally, this CSF induces granulocytes, macrophages, mast cells, stem cells, erythroid cells, eosinophils and megakaryocytes. This chain is Interleukin-3 (IL3), found in Macaca mulatta (Rhesus macaque).